Reading from the N-terminus, the 106-residue chain is Small ribosomal subunit protein bS18 (106 aa).

The span at 1 to 22 shows a compositional bias: basic and acidic residues; that stretch reads MSEETTVRPERTERSERPERPQ. The disordered stretch occupies residues 1–34; that stretch reads MSEETTVRPERTERSERPERPQYRGNGPRKRRPF.

This sequence belongs to the bacterial ribosomal protein bS18 family. As to quaternary structure, part of the 30S ribosomal subunit. Forms a tight heterodimer with protein bS6.

Functionally, binds as a heterodimer with protein bS6 to the central domain of the 16S rRNA, where it helps stabilize the platform of the 30S subunit. The polypeptide is Small ribosomal subunit protein bS18 (Geobacter metallireducens (strain ATCC 53774 / DSM 7210 / GS-15)).